Reading from the N-terminus, the 239-residue chain is Isopentenyl-diphosphate Delta-isomerase (239 aa).

Substrate is bound at residue Lys43. The Mg(2+) site is built by His47 and His58. Residues 56-210 (LLHRAFSIFL…KVKVTPWFRL (155 aa)) enclose the Nudix hydrolase domain. Substrate is bound by residues Arg77 and Lys81. Cys93 is an active-site residue. Position 94 (Ser94) interacts with substrate. Glu156 and Glu158 together coordinate Mg(2+). The active site involves Glu158.

It belongs to the IPP isomerase type 1 family. Mg(2+) is required as a cofactor.

It catalyses the reaction isopentenyl diphosphate = dimethylallyl diphosphate. It functions in the pathway isoprenoid biosynthesis; dimethylallyl diphosphate biosynthesis; dimethylallyl diphosphate from isopentenyl diphosphate: step 1/1. In terms of biological role, catalyzes the 1,3-allylic rearrangement of the homoallylic substrate isopentenyl (IPP) to its highly electrophilic allylic isomer, dimethylallyl diphosphate (DMAPP). The sequence is that of Isopentenyl-diphosphate Delta-isomerase (ipi) from Dictyostelium discoideum (Social amoeba).